The chain runs to 722 residues: Glycine--tRNA ligase beta subunit (722 aa).

It belongs to the class-II aminoacyl-tRNA synthetase family. In terms of assembly, tetramer of two alpha and two beta subunits.

It is found in the cytoplasm. The enzyme catalyses tRNA(Gly) + glycine + ATP = glycyl-tRNA(Gly) + AMP + diphosphate. The polypeptide is Glycine--tRNA ligase beta subunit (Xylella fastidiosa (strain Temecula1 / ATCC 700964)).